A 357-amino-acid polypeptide reads, in one-letter code: GTPase Obg (357 aa).

The region spanning 1-159 (MKFVDEAFID…KSLKLELKVL (159 aa)) is the Obg domain. Residues 160–334 (ADVGLLGMPN…LVQSIFQHVH (175 aa)) enclose the OBG-type G domain. GTP-binding positions include 166-173 (GMPNAGKS), 191-195 (FTTLH), 213-216 (DIPG), 284-287 (NKLD), and 315-317 (SAL). The Mg(2+) site is built by S173 and T193.

This sequence belongs to the TRAFAC class OBG-HflX-like GTPase superfamily. OBG GTPase family. In terms of assembly, monomer. Requires Mg(2+) as cofactor.

Its subcellular location is the cytoplasm. In terms of biological role, an essential GTPase which binds GTP, GDP and possibly (p)ppGpp with moderate affinity, with high nucleotide exchange rates and a fairly low GTP hydrolysis rate. Plays a role in control of the cell cycle, stress response, ribosome biogenesis and in those bacteria that undergo differentiation, in morphogenesis control. The sequence is that of GTPase Obg from Acidovorax sp. (strain JS42).